Here is a 156-residue protein sequence, read N- to C-terminus: Transcription antitermination protein NusB (156 aa).

The protein belongs to the NusB family.

Functionally, involved in transcription antitermination. Required for transcription of ribosomal RNA (rRNA) genes. Binds specifically to the boxA antiterminator sequence of the ribosomal RNA (rrn) operons. In Rickettsia akari (strain Hartford), this protein is Transcription antitermination protein NusB.